A 227-amino-acid polypeptide reads, in one-letter code: N-(5'-phosphoribosyl)anthranilate isomerase (227 aa).

This sequence belongs to the TrpF family.

It catalyses the reaction N-(5-phospho-beta-D-ribosyl)anthranilate = 1-(2-carboxyphenylamino)-1-deoxy-D-ribulose 5-phosphate. Its pathway is amino-acid biosynthesis; L-tryptophan biosynthesis; L-tryptophan from chorismate: step 3/5. The chain is N-(5'-phosphoribosyl)anthranilate isomerase from Herminiimonas arsenicoxydans.